We begin with the raw amino-acid sequence, 273 residues long: Light-independent protochlorophyllide reductase iron-sulfur ATP-binding protein (273 aa).

ATP-binding positions include 12 to 17 (GIGKST) and K41. S16 lines the Mg(2+) pocket. 2 residues coordinate [4Fe-4S] cluster: C97 and C131. ATP is bound at residue 182–183 (NR).

The protein belongs to the NifH/BchL/ChlL family. Homodimer. Protochlorophyllide reductase is composed of three subunits; BchL, BchN and BchB. Requires [4Fe-4S] cluster as cofactor.

The enzyme catalyses chlorophyllide a + oxidized 2[4Fe-4S]-[ferredoxin] + 2 ADP + 2 phosphate = protochlorophyllide a + reduced 2[4Fe-4S]-[ferredoxin] + 2 ATP + 2 H2O. It participates in porphyrin-containing compound metabolism; bacteriochlorophyll biosynthesis (light-independent). Functionally, component of the dark-operative protochlorophyllide reductase (DPOR) that uses Mg-ATP and reduced ferredoxin to reduce ring D of protochlorophyllide (Pchlide) to form chlorophyllide a (Chlide). This reaction is light-independent. The L component serves as a unique electron donor to the NB-component of the complex, and binds Mg-ATP. The polypeptide is Light-independent protochlorophyllide reductase iron-sulfur ATP-binding protein (Roseiflexus sp. (strain RS-1)).